Consider the following 473-residue polypeptide: MKLSMPRFDQAPVLVVGDVMLDRYWHGGTSRISPEAPVPVVKVDQIEDRPGGAANVALNIAALGAPASLIGVTGQDEAADSLANSLQAAGVRSVFQRIAHQPTIVKLRVMSRHQQLLRIDFEEPFATDPLSLGAEVDSLLEGVKVLVLSDYGKGALKNHQNLIQAARAKGIPVLADPKGKDFSIYRGASLITPNLSEFETIVGRCVDEAELVAKGLQLLQDLDLGALLVTRGEHGMTLLRVGQPALHLPARAREVFDVTGAGDTVISTLAAAIAAGEDLPHAVALANLAAGIVVGKLGTAAISAPELRRAIQREEGSERGVLGLEQLLLAIDDARAHNEKIVFTNGCFDILHAGHVTYLEQARAQGDRLIVAVNDDASVSRLKGPGRPINSVDRRMAVLAGLGAVDWVISFPEGTPENLLSQVKPDVLVKGGDYGIDQVVGADIVKGYGGTVKVLGLVENSSTTAIVEKIRKN.

The tract at residues 1-318 is ribokinase; it reads MKLSMPRFDQ…RAIQREEGSE (318 aa). Residue 194–197 coordinates ATP; sequence NLSE. The active site involves Asp263. The tract at residues 343–473 is cytidylyltransferase; the sequence is FTNGCFDILH…TAIVEKIRKN (131 aa).

In the N-terminal section; belongs to the carbohydrate kinase PfkB family. It in the C-terminal section; belongs to the cytidylyltransferase family. In terms of assembly, homodimer.

It catalyses the reaction D-glycero-beta-D-manno-heptose 7-phosphate + ATP = D-glycero-beta-D-manno-heptose 1,7-bisphosphate + ADP + H(+). The enzyme catalyses D-glycero-beta-D-manno-heptose 1-phosphate + ATP + H(+) = ADP-D-glycero-beta-D-manno-heptose + diphosphate. The protein operates within nucleotide-sugar biosynthesis; ADP-L-glycero-beta-D-manno-heptose biosynthesis; ADP-L-glycero-beta-D-manno-heptose from D-glycero-beta-D-manno-heptose 7-phosphate: step 1/4. It functions in the pathway nucleotide-sugar biosynthesis; ADP-L-glycero-beta-D-manno-heptose biosynthesis; ADP-L-glycero-beta-D-manno-heptose from D-glycero-beta-D-manno-heptose 7-phosphate: step 3/4. Functionally, catalyzes the phosphorylation of D-glycero-D-manno-heptose 7-phosphate at the C-1 position to selectively form D-glycero-beta-D-manno-heptose-1,7-bisphosphate. Catalyzes the ADP transfer from ATP to D-glycero-beta-D-manno-heptose 1-phosphate, yielding ADP-D-glycero-beta-D-manno-heptose. The polypeptide is Bifunctional protein HldE (Pseudomonas putida (strain ATCC 47054 / DSM 6125 / CFBP 8728 / NCIMB 11950 / KT2440)).